A 214-amino-acid polypeptide reads, in one-letter code: Pyridoxine/pyridoxamine 5'-phosphate oxidase (214 aa).

Substrate contacts are provided by residues 9-12 (RKDY) and Lys67. FMN contacts are provided by residues 62–67 (RMVLLK), 77–78 (FT), Arg83, Lys84, and Gln106. Tyr124, Arg128, and Ser132 together coordinate substrate. Residues 141–142 (QS) and Trp186 contribute to the FMN site. 192 to 194 (RLH) is a substrate binding site. Arg196 is a binding site for FMN.

It belongs to the pyridoxamine 5'-phosphate oxidase family. Homodimer. Requires FMN as cofactor.

It catalyses the reaction pyridoxamine 5'-phosphate + O2 + H2O = pyridoxal 5'-phosphate + H2O2 + NH4(+). The catalysed reaction is pyridoxine 5'-phosphate + O2 = pyridoxal 5'-phosphate + H2O2. It functions in the pathway cofactor metabolism; pyridoxal 5'-phosphate salvage; pyridoxal 5'-phosphate from pyridoxamine 5'-phosphate: step 1/1. The protein operates within cofactor metabolism; pyridoxal 5'-phosphate salvage; pyridoxal 5'-phosphate from pyridoxine 5'-phosphate: step 1/1. Catalyzes the oxidation of either pyridoxine 5'-phosphate (PNP) or pyridoxamine 5'-phosphate (PMP) into pyridoxal 5'-phosphate (PLP). This is Pyridoxine/pyridoxamine 5'-phosphate oxidase from Nostoc punctiforme (strain ATCC 29133 / PCC 73102).